A 559-amino-acid polypeptide reads, in one-letter code: Potassium-transporting ATPase potassium-binding subunit (559 aa).

12 helical membrane-spanning segments follow: residues 5–25 (GFLL…PLGT), 63–83 (LLAI…LLML), 131–151 (VGLT…VFAL), 173–193 (ITLW…IQQG), 254–274 (VQML…GEVV), 282–302 (AILW…MWAE), 327–347 (FGIL…CGAV), 356–376 (ALGG…FGGV), 379–399 (GLYG…LMVG), 416–436 (MIAL…ALAM), 483–503 (LLLA…VMAI), and 525–545 (ALFI…TFIP).

The protein belongs to the KdpA family. The system is composed of three essential subunits: KdpA, KdpB and KdpC.

It is found in the cell inner membrane. Functionally, part of the high-affinity ATP-driven potassium transport (or Kdp) system, which catalyzes the hydrolysis of ATP coupled with the electrogenic transport of potassium into the cytoplasm. This subunit binds the periplasmic potassium ions and delivers the ions to the membrane domain of KdpB through an intramembrane tunnel. The protein is Potassium-transporting ATPase potassium-binding subunit of Klebsiella pneumoniae (strain 342).